The following is a 231-amino-acid chain: Aldehyde decarbonylase (231 aa).

Fe cation-binding residues include Glu-32, Glu-60, His-63, Glu-115, and His-147.

It belongs to the aldehyde decarbonylase family. Binds 2 metal cations per subunit. The catalytic dinuclear metal-binding site could be either a di-iron or a manganese-iron cofactor. is required as a cofactor.

It catalyses the reaction a long-chain fatty aldehyde + 2 NADPH + O2 + H(+) = a long-chain alkane + formate + 2 NADP(+) + H2O. In terms of biological role, catalyzes the decarbonylation of fatty aldehydes to alkanes. Requires the presence of ferredoxin, ferredoxin reductase and NADPH for in vitro decarbonylase activity. Involved in the biosynthesis of alkanes, mainly heptadecane and pentadecane. The chain is Aldehyde decarbonylase from Synechocystis sp. (strain ATCC 27184 / PCC 6803 / Kazusa).